Consider the following 596-residue polypeptide: Actin-histidine N-methyltransferase (596 aa).

S-adenosyl-L-methionine is bound by residues R75, 104 to 106 (EGY), R254, 275 to 279 (DMCNH), and 325 to 327 (NGF). In terms of domain architecture, SET spans 94 to 314 (DGFEISNFAD…EGEQIYIFYG (221 aa)). The disordered stretch occupies residues 556 to 596 (QCKDLNGTQEDPPGGGAVVKEIEKHDPSAKRTEGEPKDAGK). The segment covering 575–596 (KEIEKHDPSAKRTEGEPKDAGK) has biased composition (basic and acidic residues).

Belongs to the class V-like SAM-binding methyltransferase superfamily. SETD3 actin-histidine methyltransferase family.

It is found in the cytoplasm. It carries out the reaction L-histidyl-[protein] + S-adenosyl-L-methionine = N(tele)-methyl-L-histidyl-[protein] + S-adenosyl-L-homocysteine + H(+). In terms of biological role, protein-histidine N-methyltransferase that specifically mediates 3-methylhistidine (tele-methylhistidine) methylation of actin at 'His-73'. Does not have protein-lysine N-methyltransferase activity and probably only catalyzes histidine methylation of actin. This chain is Actin-histidine N-methyltransferase, found in Danio rerio (Zebrafish).